The sequence spans 329 residues: tRNA(Ile)-lysidine synthase (329 aa).

An ATP-binding site is contributed by 37–42 (SGGSDS).

This sequence belongs to the tRNA(Ile)-lysidine synthase family.

It localises to the cytoplasm. The enzyme catalyses cytidine(34) in tRNA(Ile2) + L-lysine + ATP = lysidine(34) in tRNA(Ile2) + AMP + diphosphate + H(+). Ligates lysine onto the cytidine present at position 34 of the AUA codon-specific tRNA(Ile) that contains the anticodon CAU, in an ATP-dependent manner. Cytidine is converted to lysidine, thus changing the amino acid specificity of the tRNA from methionine to isoleucine. This is tRNA(Ile)-lysidine synthase from Zymomonas mobilis subsp. mobilis (strain ATCC 31821 / ZM4 / CP4).